Reading from the N-terminus, the 496-residue chain is GTPase Der (496 aa).

2 EngA-type G domains span residues 3–168 (PIIA…VPEK) and 210–383 (IKLA…DCST). Residues 9–16 (GRPNVGKS), 56–60 (DTGGI), 120–123 (NKID), 216–223 (GRPNVGKS), 263–267 (DTAGV), and 328–331 (NKWD) each bind GTP. The KH-like domain occupies 384 to 468 (KRINTSLLTR…PIRIQFKESE (85 aa)).

It belongs to the TRAFAC class TrmE-Era-EngA-EngB-Septin-like GTPase superfamily. EngA (Der) GTPase family. In terms of assembly, associates with the 50S ribosomal subunit.

Its function is as follows. GTPase that plays an essential role in the late steps of ribosome biogenesis. The chain is GTPase Der from Hamiltonella defensa subsp. Acyrthosiphon pisum (strain 5AT).